A 146-amino-acid chain; its full sequence is Transmembrane protein 207 (146 aa).

The N-terminal stretch at 1–29 (MSRSRLFSVTSAISTIGILCLPLFQLVLS) is a signal peptide. Residues 52–72 (IWILLLLVLVAALLCGAVVLC) form a helical membrane-spanning segment.

As to quaternary structure, interacts with WWOX. As to expression, expressed in some signet-ring cell carcinoma, especially those showing high invasion and metastatic activity (at protein level).

Its subcellular location is the membrane. The chain is Transmembrane protein 207 (TMEM207) from Homo sapiens (Human).